Here is a 249-residue protein sequence, read N- to C-terminus: Phosphate import ATP-binding protein PstB (249 aa).

Residues L5–V244 enclose the ABC transporter domain. An ATP-binding site is contributed by G37–S44.

It belongs to the ABC transporter superfamily. Phosphate importer (TC 3.A.1.7) family. The complex is composed of two ATP-binding proteins (PstB), two transmembrane proteins (PstC and PstA) and a solute-binding protein (PstS).

The protein resides in the cell inner membrane. The catalysed reaction is phosphate(out) + ATP + H2O = ADP + 2 phosphate(in) + H(+). Functionally, part of the ABC transporter complex PstSACB involved in phosphate import. Responsible for energy coupling to the transport system. The protein is Phosphate import ATP-binding protein PstB of Salinibacter ruber (strain DSM 13855 / M31).